A 440-amino-acid chain; its full sequence is 3-phosphoshikimate 1-carboxyvinyltransferase (440 aa).

Residues Lys-26, Ser-27, and Arg-31 each contribute to the 3-phosphoshikimate site. Residue Lys-26 participates in phosphoenolpyruvate binding. Phosphoenolpyruvate is bound by residues Gly-100 and Arg-134. The 3-phosphoshikimate site is built by Ser-180, Ser-181, Gln-182, Ser-208, Asp-323, Asn-346, and Lys-350. Residue Gln-182 participates in phosphoenolpyruvate binding. The active-site Proton acceptor is Asp-323. Positions 354, 398, and 423 each coordinate phosphoenolpyruvate.

It belongs to the EPSP synthase family. In terms of assembly, monomer.

It localises to the cytoplasm. The enzyme catalyses 3-phosphoshikimate + phosphoenolpyruvate = 5-O-(1-carboxyvinyl)-3-phosphoshikimate + phosphate. Its pathway is metabolic intermediate biosynthesis; chorismate biosynthesis; chorismate from D-erythrose 4-phosphate and phosphoenolpyruvate: step 6/7. Catalyzes the transfer of the enolpyruvyl moiety of phosphoenolpyruvate (PEP) to the 5-hydroxyl of shikimate-3-phosphate (S3P) to produce enolpyruvyl shikimate-3-phosphate and inorganic phosphate. The polypeptide is 3-phosphoshikimate 1-carboxyvinyltransferase (Pasteurella multocida (strain Pm70)).